A 384-amino-acid chain; its full sequence is Centrosomal protein of 44 kDa (384 aa).

The segment at 11–188 (RKLEQRLRTL…TKCYSSALVE (178 aa)) is binds with microtubules and centrioles. The tract at residues 191 to 222 (EEEEPTSDSEGGSHLEHEMESPFETAETTPNS) is disordered. Residues 201 to 210 (GGSHLEHEME) are compositionally biased toward basic and acidic residues. Coiled coils occupy residues 221 to 260 (NSEQ…KGKI) and 353 to 378 (TEDS…SKLL).

As to quaternary structure, binds to centriolar microtubules.

Its subcellular location is the cytoplasm. The protein localises to the cytoskeleton. It is found in the microtubule organizing center. It localises to the centrosome. The protein resides in the centriole. Its subcellular location is the spindle pole. The protein localises to the midbody. Functionally, centriole-enriched microtubule-binding protein involved in centriole biogenesis. In collaboration with CEP295 and POC1B, is required for the centriole-to-centrosome conversion by ensuring the formation of bona fide centriole wall. Functions as a linker component that maintains centrosome cohesion. Associates with CROCC and regulates its stability and localization to the centrosome. The sequence is that of Centrosomal protein of 44 kDa (cep44) from Xenopus laevis (African clawed frog).